We begin with the raw amino-acid sequence, 206 residues long: Max dimerization protein 3 (206 aa).

An interaction with SIN3A and SIN3B region spans residues Ile8–Ala25. Disordered regions lie at residues Tyr29–Glu66 and Lys122–Leu171. Residues Ser57 to Leu109 enclose the bHLH domain. Residues Lys126–Gln138 are compositionally biased toward low complexity. Residues Ala143–Ser153 show a composition bias toward basic and acidic residues.

In terms of assembly, efficient DNA binding requires dimerization with another bHLH protein. Binds DNA as a heterodimer with MAX. Interacts with SIN3A AND SIN3B. Interacts with RNF17. In terms of tissue distribution, expressed only in the proliferating areas of the testis and thymus.

The protein localises to the nucleus. Transcriptional repressor. Binds with MAX to form a sequence-specific DNA-binding protein complex which recognizes the core sequence 5'-CAC[GA]TG-3'. Antagonizes MYC transcriptional activity by competing for MAX and suppresses MYC dependent cell transformation. The sequence is that of Max dimerization protein 3 (Mxd3) from Mus musculus (Mouse).